Here is a 134-residue protein sequence, read N- to C-terminus: Putative STAG3-like protein 2 (134 aa).

In terms of domain architecture, SCD spans 10–95 (PKVTCRDVLP…GRFKDWMVSM (86 aa)).

It belongs to the SCC3 family.

It is found in the nucleus. In Homo sapiens (Human), this protein is Putative STAG3-like protein 2 (STAG3L2).